A 375-amino-acid polypeptide reads, in one-letter code: Oleosin-B6 (375 aa).

Residues 1–32 (MKEEIQNETAQTQLQREGRMFSFLFPVIEVIK) form a polar region. Transmembrane regions (helical) follow at residues 21–43 (FSFL…SVVF), 55–75 (AVAL…LVPA), and 81–101 (LLAT…GLLM). Positions 33 to 112 (VVMASVASVV…LIKHPGKEGA (80 aa)) are hydrophobic. Disordered stretches follow at residues 144–284 (PGVG…SFLS) and 303–375 (IPGF…DESS). A compositionally biased stretch (basic and acidic residues) spans 148–179 (KKSEGRGESKGKKGKKGKSEHGRGKHEGEGKS). Residues 193–210 (NNPPPAGAPPTGSPPAAP) show a composition bias toward pro residues. A run of 23 repeats spans residues 207–209 (PAA), 210–212 (PAA), 213–215 (PEA), 216–218 (PAA), 219–221 (PAA), 222–224 (PAA), 225–227 (PAA), 228–230 (PAA), 231–233 (PAA), 234–236 (PAA), 237–239 (PED), 240–242 (PAA), 243–245 (PAA), 246–248 (PEA), 249–251 (PAT), 252–254 (PAA), 255–257 (PPA), 258–260 (PAA), 261–263 (APA), 264–266 (PAA), 267–269 (PAA), 270–272 (PPA), and 273–275 (PAA). Positions 207 to 275 (PAAPAAPEAP…APAAPPAPAA (69 aa)) are 23 X 3 AA approximate tandem repeats of P-A-A. Residues 211–251 (AAPEAPAAPAAPAAPAAPAAPAAPAAPEDPAAPAAPEAPAT) show a composition bias toward low complexity. A compositionally biased stretch (pro residues) spans 252–280 (PAAPPAPAAAPAPAAPAAPPAPAAPPRPP). The span at 316–331 (SKGGKKSKGKGKSNGR) shows a compositional bias: basic residues.

It belongs to the oleosin family. The full-length protein is found in the tapetal lipid bodies of immature anthers, the proteolytically cleaved C-terminal product is found on the coats of pollen grains. Not found in flowers, developing embryos or leaf tissue.

The protein localises to the lipid droplet. Its subcellular location is the membrane. Its function is as follows. Many of the major pollen coat proteins are derived from endoproteolytic cleavage of oleosin-like proteins. This Brassica napus (Rape) protein is Oleosin-B6.